The primary structure comprises 379 residues: Probable protein arginine N-methyltransferase 6.1 (379 aa).

Positions 1-35 are disordered; it reads MLPSHLNGHSPLARRRPRLSAASPPATGDSDAAAA. A compositionally biased stretch (low complexity) spans 19 to 35; it reads LSAASPPATGDSDAAAA. The SAM-dependent MTase PRMT-type domain occupies 45–379; it reads DRIYFQSYSH…FLNIQLDCTM (335 aa). Residues His-58, Arg-67, Gly-91, Glu-113, and Glu-142 each contribute to the S-adenosyl-L-methionine site. Catalysis depends on residues Glu-156 and Glu-165.

It belongs to the class I-like SAM-binding methyltransferase superfamily. Protein arginine N-methyltransferase family. PRMT6 subfamily.

Its function is as follows. Arginine methyltransferase that can both catalyze the formation of omega-N monomethylarginine (MMA) and asymmetrical dimethylarginine (aDMA). The polypeptide is Probable protein arginine N-methyltransferase 6.1 (PRMT6.1) (Oryza sativa subsp. indica (Rice)).